We begin with the raw amino-acid sequence, 349 residues long: N-acetyltaurine hydrolase (349 aa).

A divalent metal cation contacts are provided by His-26, His-28, Glu-169, His-201, His-230, and Asp-298.

It belongs to the metallo-dependent hydrolases superfamily. Phosphotriesterase family. It depends on a divalent metal cation as a cofactor. Expressed primarily in proximal tubules of the kidney.

It localises to the cytoplasm. It is found in the cytosol. The catalysed reaction is N-acetyltaurine + H2O = taurine + acetate. The enzyme catalyses N-propanoyltaurine + H2O = propanoate + taurine. It carries out the reaction N-acetyl-L-methionine + H2O = L-methionine + acetate. It catalyses the reaction N-acetyl-L-isoleucine + H2O = L-isoleucine + acetate. The catalysed reaction is N-acetyl-L-leucine + H2O = L-leucine + acetate. The enzyme catalyses N-acetyl-L-valine + H2O = L-valine + acetate. Its function is as follows. N-acetyltaurine hydrolase that regulates feeding by catalyzing the hydrolysis of N-acetyltaurine into taurine and acetate. N-acetyltaurine has anorexigenic and anti-obesity effects that are dependent on GFRAL receptor and GDF15. PTER also acts on other N-acetyl amino acids (Met, Ile, Leu, Val) and N-propionyltaurine, but at lower rates. Binds resiniferotoxin, a vanilloid that desensitizes nociceptive neurons. The protein is N-acetyltaurine hydrolase of Rattus norvegicus (Rat).